The sequence spans 242 residues: Ubiquinone/menaquinone biosynthesis C-methyltransferase UbiE (242 aa).

S-adenosyl-L-methionine-binding positions include Thr-69, Asp-87, and 114–115 (NA).

This sequence belongs to the class I-like SAM-binding methyltransferase superfamily. MenG/UbiE family.

It carries out the reaction a 2-demethylmenaquinol + S-adenosyl-L-methionine = a menaquinol + S-adenosyl-L-homocysteine + H(+). It catalyses the reaction a 2-methoxy-6-(all-trans-polyprenyl)benzene-1,4-diol + S-adenosyl-L-methionine = a 5-methoxy-2-methyl-3-(all-trans-polyprenyl)benzene-1,4-diol + S-adenosyl-L-homocysteine + H(+). It participates in quinol/quinone metabolism; menaquinone biosynthesis; menaquinol from 1,4-dihydroxy-2-naphthoate: step 2/2. The protein operates within cofactor biosynthesis; ubiquinone biosynthesis. In terms of biological role, methyltransferase required for the conversion of demethylmenaquinol (DMKH2) to menaquinol (MKH2) and the conversion of 2-polyprenyl-6-methoxy-1,4-benzoquinol (DDMQH2) to 2-polyprenyl-3-methyl-6-methoxy-1,4-benzoquinol (DMQH2). This is Ubiquinone/menaquinone biosynthesis C-methyltransferase UbiE from Zymomonas mobilis subsp. mobilis (strain ATCC 31821 / ZM4 / CP4).